Reading from the N-terminus, the 400-residue chain is Probable peptidoglycan glycosyltransferase FtsW (400 aa).

The Cytoplasmic portion of the chain corresponds to Met1–Asp24. Residues Leu25 to Ala45 form a helical membrane-spanning segment. The Periplasmic portion of the chain corresponds to Ser46 to Arg63. Residues Gln64 to Glu84 form a helical membrane-spanning segment. At Arg85 to Arg88 the chain is on the cytoplasmic side. A helical membrane pass occupies residues Ala89–Val109. Topologically, residues Gly110–Arg118 are periplasmic. Residues Trp119–Met139 traverse the membrane as a helical segment. Residues Tyr140–Arg153 lie on the Cytoplasmic side of the membrane. Residues Leu154–Leu174 form a helical membrane-spanning segment. At Leu175 to Pro177 the chain is on the periplasmic side. A helical membrane pass occupies residues Asp178–Ala198. Position 199 (Lys199) is a topological domain, cytoplasmic. Residues Leu200–Ala220 traverse the membrane as a helical segment. Topologically, residues Ala221–Asp278 are periplasmic. A helical membrane pass occupies residues Phe279 to Leu299. At Phe300–His324 the chain is on the cytoplasmic side. The helical transmembrane segment at Leu325–Met345 threads the bilayer. The Periplasmic segment spans residues Gly346 to Thr354. A helical transmembrane segment spans residues Leu355–Val375. Topologically, residues Met376–Ala400 are cytoplasmic.

The protein belongs to the SEDS family. FtsW subfamily.

The protein localises to the cell inner membrane. It catalyses the reaction [GlcNAc-(1-&gt;4)-Mur2Ac(oyl-L-Ala-gamma-D-Glu-L-Lys-D-Ala-D-Ala)](n)-di-trans,octa-cis-undecaprenyl diphosphate + beta-D-GlcNAc-(1-&gt;4)-Mur2Ac(oyl-L-Ala-gamma-D-Glu-L-Lys-D-Ala-D-Ala)-di-trans,octa-cis-undecaprenyl diphosphate = [GlcNAc-(1-&gt;4)-Mur2Ac(oyl-L-Ala-gamma-D-Glu-L-Lys-D-Ala-D-Ala)](n+1)-di-trans,octa-cis-undecaprenyl diphosphate + di-trans,octa-cis-undecaprenyl diphosphate + H(+). The protein operates within cell wall biogenesis; peptidoglycan biosynthesis. In terms of biological role, peptidoglycan polymerase that is essential for cell division. This Thioalkalivibrio sp. (strain K90mix) protein is Probable peptidoglycan glycosyltransferase FtsW.